Here is a 215-residue protein sequence, read N- to C-terminus: Adenylate kinase (215 aa).

10–15 is a binding site for ATP; it reads GSGKGT. Positions 30–59 are NMP; it reads STGDILREHVRNGTELGKEAKKYMDAGQLV. Residues Thr31, Arg36, 57–59, 85–88, and Gln92 each bind AMP; these read QLV and GYPR. The tract at residues 126 to 162 is LID; it reads GRRMCKCGRSYHIIFNPPKVPGKCDECGGELYHRDDD. Arg127 contacts ATP. Cys130 and Cys132 together coordinate Zn(2+). 135–136 contacts ATP; it reads SY. Residues Cys149 and Cys152 each contribute to the Zn(2+) site. Residues Arg159 and Arg170 each coordinate AMP. ATP is bound at residue Gly198.

The protein belongs to the adenylate kinase family. As to quaternary structure, monomer.

The protein localises to the cytoplasm. The catalysed reaction is AMP + ATP = 2 ADP. It functions in the pathway purine metabolism; AMP biosynthesis via salvage pathway; AMP from ADP: step 1/1. Catalyzes the reversible transfer of the terminal phosphate group between ATP and AMP. Plays an important role in cellular energy homeostasis and in adenine nucleotide metabolism. The polypeptide is Adenylate kinase (Methanothrix thermoacetophila (strain DSM 6194 / JCM 14653 / NBRC 101360 / PT) (Methanosaeta thermophila)).